The primary structure comprises 603 residues: NADH-ubiquinone oxidoreductase chain 5 (603 aa).

17 helical membrane passes run 4-24 (YATMTTLALTSLIPPILTTFI), 38-58 (SIVASTFIISLFPTTMFLCLD), 87-107 (MMFIPVALFVTWSIMEFSLWY), 114-134 (INQFFKYLLIFLITMLILVTA), 140-160 (LFIGWEGVGIMSFLLIGWWYA), 171-191 (AILYNRIGDIGFILALAWFLL), 210-230 (LIPLLGFLLAAAGKSAQLGLH), 241-261 (TPVSALLHSSTMVVAGVFLLI), 272-292 (LAQTLTLCLGAITTLFAAVCA), 301-320 (IVAFSTSSQLGLMVATIGIG), 325-347 (AFLHICTHAFFKAMLFMCSGSII), 370-390 (STSLAIGSLALMGMPFLTGFY), 407-429 (WALSIILIATSLTSAYSTRMILL), 457-477 (LTIGSLFAGFFITNNILPTSV), 482-502 (IPLYLKLTALSITLLGLLTAL), 537-557 (IPYLGLLMSQNLPLLLLDLIW), and 582-602 (GLIKLYFLSFFFPLLLILLLI).

This sequence belongs to the complex I subunit 5 family. As to quaternary structure, core subunit of respiratory chain NADH dehydrogenase (Complex I) which is composed of 45 different subunits.

The protein localises to the mitochondrion inner membrane. The enzyme catalyses a ubiquinone + NADH + 5 H(+)(in) = a ubiquinol + NAD(+) + 4 H(+)(out). Its function is as follows. Core subunit of the mitochondrial membrane respiratory chain NADH dehydrogenase (Complex I) which catalyzes electron transfer from NADH through the respiratory chain, using ubiquinone as an electron acceptor. Essential for the catalytic activity and assembly of complex I. The chain is NADH-ubiquinone oxidoreductase chain 5 (MT-ND5) from Gorilla gorilla gorilla (Western lowland gorilla).